The primary structure comprises 389 residues: MENADRIKNLPPYLFAEIDKMIARAKKEGVDVISFGIGDPDQPTPDNIINKMIEAVKDPSTHSYPSYEGMYEYRKTVADWYKNNYGRELDPDKEVVSLIGSKEGIAHLPFCYINPGDIALVPDPGYPVYKTSVLLAGGKPVQVPLVEENNFLPDLKAIDEDIARKAKLFFINYPNNPTGAIAPEEFYEELIDFADKYDIIIAHDAAYSEIGLDGYNPPSFMQFEGAKKVGIEFNSLSKPFNMTGWRVGWAVGRSDVIESLGRIKTNIDSGIFEAIQYAGIEALTGPEDNIEKMTELYSKRRDLLVEGLRELGWEVPVNKATFYIWAKVPEGYNSTEFSTHVFEKTGIFFTPGNGYGEFGEGYVRIALTVTEERIKEALERLKNSDIKFK.

Substrate contacts are provided by Tyr-13 and Gly-38. Pyridoxal 5'-phosphate is bound by residues Tyr-67, 101-102 (SK), Tyr-126, Asn-176, Tyr-207, and 235-237 (SLS). Positions 102, 126, and 176 each coordinate substrate. An N6-(pyridoxal phosphate)lysine modification is found at Lys-238. Arg-246 contributes to the pyridoxal 5'-phosphate binding site. Arg-364 is a substrate binding site.

This sequence belongs to the class-I pyridoxal-phosphate-dependent aminotransferase family. LL-diaminopimelate aminotransferase subfamily. As to quaternary structure, homodimer. Pyridoxal 5'-phosphate is required as a cofactor.

It carries out the reaction (2S,6S)-2,6-diaminopimelate + 2-oxoglutarate = (S)-2,3,4,5-tetrahydrodipicolinate + L-glutamate + H2O + H(+). The protein operates within amino-acid biosynthesis; L-lysine biosynthesis via DAP pathway; LL-2,6-diaminopimelate from (S)-tetrahydrodipicolinate (aminotransferase route): step 1/1. Functionally, involved in the synthesis of meso-diaminopimelate (m-DAP or DL-DAP), required for both lysine and peptidoglycan biosynthesis. Catalyzes the direct conversion of tetrahydrodipicolinate to LL-diaminopimelate. The chain is LL-diaminopimelate aminotransferase from Halothermothrix orenii (strain H 168 / OCM 544 / DSM 9562).